Here is a 128-residue protein sequence, read N- to C-terminus: NADH dehydrogenase [ubiquinone] 1 beta subcomplex subunit 6 (128 aa).

S2 carries the N-acetylserine modification. Position 24 is an N6-acetyllysine (K24). A helical membrane pass occupies residues 64–86 (TYRHSIFAFTHVLIPVWIIHYYL).

The protein belongs to the complex I NDUFB6 subunit family. Complex I is composed of 45 different subunits.

The protein resides in the mitochondrion inner membrane. Functionally, accessory subunit of the mitochondrial membrane respiratory chain NADH dehydrogenase (Complex I), that is believed not to be involved in catalysis. Complex I functions in the transfer of electrons from NADH to the respiratory chain. The immediate electron acceptor for the enzyme is believed to be ubiquinone. The sequence is that of NADH dehydrogenase [ubiquinone] 1 beta subcomplex subunit 6 (NDUFB6) from Bos taurus (Bovine).